A 178-amino-acid chain; its full sequence is Crossover junction endodeoxyribonuclease RuvC (178 aa).

Catalysis depends on residues Asp7, Glu67, and Asp139. The Mg(2+) site is built by Asp7, Glu67, and Asp139.

It belongs to the RuvC family. As to quaternary structure, homodimer which binds Holliday junction (HJ) DNA. The HJ becomes 2-fold symmetrical on binding to RuvC with unstacked arms; it has a different conformation from HJ DNA in complex with RuvA. In the full resolvosome a probable DNA-RuvA(4)-RuvB(12)-RuvC(2) complex forms which resolves the HJ. Requires Mg(2+) as cofactor.

It localises to the cytoplasm. The enzyme catalyses Endonucleolytic cleavage at a junction such as a reciprocal single-stranded crossover between two homologous DNA duplexes (Holliday junction).. Its function is as follows. The RuvA-RuvB-RuvC complex processes Holliday junction (HJ) DNA during genetic recombination and DNA repair. Endonuclease that resolves HJ intermediates. Cleaves cruciform DNA by making single-stranded nicks across the HJ at symmetrical positions within the homologous arms, yielding a 5'-phosphate and a 3'-hydroxyl group; requires a central core of homology in the junction. The consensus cleavage sequence is 5'-(A/T)TT(C/G)-3'. Cleavage occurs on the 3'-side of the TT dinucleotide at the point of strand exchange. HJ branch migration catalyzed by RuvA-RuvB allows RuvC to scan DNA until it finds its consensus sequence, where it cleaves and resolves the cruciform DNA. This Trichlorobacter lovleyi (strain ATCC BAA-1151 / DSM 17278 / SZ) (Geobacter lovleyi) protein is Crossover junction endodeoxyribonuclease RuvC.